Here is a 148-residue protein sequence, read N- to C-terminus: Deoxyuridine 5'-triphosphate nucleotidohydrolase (148 aa).

It belongs to the dUTPase family. Mg(2+) serves as cofactor.

It carries out the reaction dUTP + H2O = dUMP + diphosphate + H(+). The protein operates within pyrimidine metabolism; dUMP biosynthesis; dUMP from dCTP (dUTP route): step 2/2. Its function is as follows. This enzyme decreases the intracellular concentration of dUTP so that uracil cannot be incorporated into viral progeny DNA. This activity is sufficient to exclude uracil from the DNA during phage replication. In the case of dUTPase mutant phages, the host dUTPase activity is not sufficient to exclude uracil from T5 DNA and uracil are incorporated, leading to decreased phage viability. This is Deoxyuridine 5'-triphosphate nucleotidohydrolase (DUT) from Escherichia coli (Enterobacteria phage T5).